The chain runs to 1117 residues: RNA-directed RNA polymerase (1117 aa).

The segment covering Met1–Ala17 has biased composition (polar residues). A disordered region spans residues Met1–Leu23.

It catalyses the reaction RNA(n) + a ribonucleoside 5'-triphosphate = RNA(n+1) + diphosphate. In terms of biological role, RNA-dependent RNA polymerase which replicates the viral genome. The polypeptide is RNA-directed RNA polymerase (p1) (Penicillium chrysogenum (Penicillium notatum)).